We begin with the raw amino-acid sequence, 937 residues long: Aconitate hydratase A (937 aa).

The segment at M410–V450 is disordered. Positions P418–A429 are enriched in polar residues. Over residues G433–G444 the composition is skewed to low complexity. C475, C541, and C544 together coordinate [4Fe-4S] cluster.

This sequence belongs to the aconitase/IPM isomerase family. Monomer. Requires [4Fe-4S] cluster as cofactor.

It catalyses the reaction citrate = D-threo-isocitrate. It carries out the reaction (2S,3R)-3-hydroxybutane-1,2,3-tricarboxylate = 2-methyl-cis-aconitate + H2O. The protein operates within carbohydrate metabolism; tricarboxylic acid cycle; isocitrate from oxaloacetate: step 2/2. It functions in the pathway organic acid metabolism; propanoate degradation. Involved in the catabolism of short chain fatty acids (SCFA) via the tricarboxylic acid (TCA)(acetyl degradation route) and probably via the 2-methylcitrate cycle I (propionate degradation route). Catalyzes the reversible isomerization of citrate to isocitrate via cis-aconitate. Could catalyze the hydration of 2-methyl-cis-aconitate to yield (2R,3S)-2-methylisocitrate. The apo form of AcnA functions as a RNA-binding regulatory protein. In Corynebacterium efficiens (strain DSM 44549 / YS-314 / AJ 12310 / JCM 11189 / NBRC 100395), this protein is Aconitate hydratase A (acn).